The following is a 365-amino-acid chain: Phospho-N-acetylmuramoyl-pentapeptide-transferase (365 aa).

9 consecutive transmembrane segments (helical) span residues 19–39 (LLIL…WLLT), 47–67 (AVIL…FGVI), 91–111 (AGTP…VALI), 115–135 (FDPQ…IGWV), 155–175 (LLLQ…TGSP), 184–204 (GNLI…VLVA), 224–244 (AIAF…LMIF), 281–301 (AVGL…IFFV), and 344–364 (TQIV…GFIS).

The protein belongs to the glycosyltransferase 4 family. MraY subfamily. Mg(2+) is required as a cofactor.

The protein resides in the cell inner membrane. It carries out the reaction UDP-N-acetyl-alpha-D-muramoyl-L-alanyl-gamma-D-glutamyl-meso-2,6-diaminopimeloyl-D-alanyl-D-alanine + di-trans,octa-cis-undecaprenyl phosphate = di-trans,octa-cis-undecaprenyl diphospho-N-acetyl-alpha-D-muramoyl-L-alanyl-D-glutamyl-meso-2,6-diaminopimeloyl-D-alanyl-D-alanine + UMP. Its pathway is cell wall biogenesis; peptidoglycan biosynthesis. In terms of biological role, catalyzes the initial step of the lipid cycle reactions in the biosynthesis of the cell wall peptidoglycan: transfers peptidoglycan precursor phospho-MurNAc-pentapeptide from UDP-MurNAc-pentapeptide onto the lipid carrier undecaprenyl phosphate, yielding undecaprenyl-pyrophosphoryl-MurNAc-pentapeptide, known as lipid I. This is Phospho-N-acetylmuramoyl-pentapeptide-transferase from Gloeothece citriformis (strain PCC 7424) (Cyanothece sp. (strain PCC 7424)).